The following is a 163-amino-acid chain: F-box protein At2g35280 (163 aa).

One can recognise an F-box domain in the interval 8-57 (ISRLEALPQDLLREIVAKIGVKSAEDYHNCILSCKELGASANDERVLKTL).

This chain is F-box protein At2g35280, found in Arabidopsis thaliana (Mouse-ear cress).